Reading from the N-terminus, the 318-residue chain is GTP cyclohydrolase MptA (318 aa).

This sequence belongs to the GTP cyclohydrolase IV family. In terms of assembly, homodimer. Fe(2+) serves as cofactor.

The catalysed reaction is GTP + H2O = 7,8-dihydroneopterin 2',3'-cyclic phosphate + formate + diphosphate + H(+). It participates in cofactor biosynthesis; 5,6,7,8-tetrahydromethanopterin biosynthesis. Functionally, converts GTP to 7,8-dihydro-D-neopterin 2',3'-cyclic phosphate, the first intermediate in the biosynthesis of coenzyme methanopterin. In Methanothermobacter thermautotrophicus (strain ATCC 29096 / DSM 1053 / JCM 10044 / NBRC 100330 / Delta H) (Methanobacterium thermoautotrophicum), this protein is GTP cyclohydrolase MptA.